The chain runs to 70 residues: MKQGIHPEYKEITATCSCGNVIKTRSTLGKDINLDVCGNCHPFYTGKQRVVDTGGRVERFNSRFKIPSTK.

4 residues coordinate Zn(2+): Cys-16, Cys-18, Cys-37, and Cys-40.

It belongs to the bacterial ribosomal protein bL31 family. Type A subfamily. In terms of assembly, part of the 50S ribosomal subunit. Zn(2+) is required as a cofactor.

In terms of biological role, binds the 23S rRNA. The sequence is that of Large ribosomal subunit protein bL31 from Haemophilus influenzae (strain PittEE).